The primary structure comprises 511 residues: Bifunctional purine biosynthesis protein PurH (511 aa).

An MGS-like domain is found at 1–145; it reads MKRRAIISVS…KNHAYVTAVV (145 aa).

It belongs to the PurH family.

It catalyses the reaction (6R)-10-formyltetrahydrofolate + 5-amino-1-(5-phospho-beta-D-ribosyl)imidazole-4-carboxamide = 5-formamido-1-(5-phospho-D-ribosyl)imidazole-4-carboxamide + (6S)-5,6,7,8-tetrahydrofolate. The catalysed reaction is IMP + H2O = 5-formamido-1-(5-phospho-D-ribosyl)imidazole-4-carboxamide. The protein operates within purine metabolism; IMP biosynthesis via de novo pathway; 5-formamido-1-(5-phospho-D-ribosyl)imidazole-4-carboxamide from 5-amino-1-(5-phospho-D-ribosyl)imidazole-4-carboxamide (10-formyl THF route): step 1/1. It functions in the pathway purine metabolism; IMP biosynthesis via de novo pathway; IMP from 5-formamido-1-(5-phospho-D-ribosyl)imidazole-4-carboxamide: step 1/1. This is Bifunctional purine biosynthesis protein PurH from Anoxybacillus flavithermus (strain DSM 21510 / WK1).